We begin with the raw amino-acid sequence, 232 residues long: CD302 antigen (232 aa).

The first 22 residues, 1–22, serve as a signal peptide directing secretion; it reads MPRAAPPALLLPLLGLAAAAAA. Over 23-168 the chain is Extracellular; it reads DCPSSTWVQF…YEKKYLSDNR (146 aa). Residues 32 to 152 enclose the C-type lectin domain; it reads FQDSCYIFLQ…CEVSSVEGTL (121 aa). Asn109 carries an N-linked (GlcNAc...) asparagine glycan. Cysteines 128 and 143 form a disulfide. A helical transmembrane segment spans residues 169-189; it reads ILISALVIASTVILTVLGAVV. The Cytoplasmic portion of the chain corresponds to 190–232; it reads WFLYKRSLDSGFTTVFSAAHQSPYNDDCVLVVAEENEYDIQFN.

It localises to the membrane. It is found in the cell projection. Its subcellular location is the filopodium. The protein resides in the cytoplasm. The protein localises to the cell cortex. It localises to the microvillus. Potential multifunctional C-type lectin receptor that may play roles in endocytosis and phagocytosis as well as in cell adhesion and migration. This Bos taurus (Bovine) protein is CD302 antigen.